The sequence spans 196 residues: Large ribosomal subunit protein uL10 (196 aa).

The tract at residues 163 to 196 (GAPAAAEAPAAEEAPAAEAAETEAPAEAAATEEN) is disordered. The span at 164-196 (APAAAEAPAAEEAPAAEAAETEAPAEAAATEEN) shows a compositional bias: low complexity.

The protein belongs to the universal ribosomal protein uL10 family. Part of the ribosomal stalk of the 50S ribosomal subunit. The N-terminus interacts with L11 and the large rRNA to form the base of the stalk. The C-terminus forms an elongated spine to which L12 dimers bind in a sequential fashion forming a multimeric L10(L12)X complex.

In terms of biological role, forms part of the ribosomal stalk, playing a central role in the interaction of the ribosome with GTP-bound translation factors. This is Large ribosomal subunit protein uL10 from Arthrobacter sp. (strain FB24).